Here is a 792-residue protein sequence, read N- to C-terminus: Phenylalanine--tRNA ligase beta subunit (792 aa).

One can recognise a tRNA-binding domain in the interval 39-150 (APAFHKVVVA…PDAPVGTDFR (112 aa)). In terms of domain architecture, B5 spans 405–480 (PARDPIRLGL…RMYGYNRIAA (76 aa)). Mg(2+)-binding residues include D458, D464, E467, and E468. Positions 698 to 791 (SKYPPIRRDI…LENRFGARLR (94 aa)) constitute an FDX-ACB domain.

It belongs to the phenylalanyl-tRNA synthetase beta subunit family. Type 1 subfamily. In terms of assembly, tetramer of two alpha and two beta subunits. It depends on Mg(2+) as a cofactor.

The protein localises to the cytoplasm. The enzyme catalyses tRNA(Phe) + L-phenylalanine + ATP = L-phenylalanyl-tRNA(Phe) + AMP + diphosphate + H(+). The chain is Phenylalanine--tRNA ligase beta subunit from Nitrosospira multiformis (strain ATCC 25196 / NCIMB 11849 / C 71).